We begin with the raw amino-acid sequence, 254 residues long: 5-oxoprolinase subunit A (254 aa).

Belongs to the LamB/PxpA family. In terms of assembly, forms a complex composed of PxpA, PxpB and PxpC.

It catalyses the reaction 5-oxo-L-proline + ATP + 2 H2O = L-glutamate + ADP + phosphate + H(+). Its function is as follows. Catalyzes the cleavage of 5-oxoproline to form L-glutamate coupled to the hydrolysis of ATP to ADP and inorganic phosphate. In Acinetobacter baumannii (strain ATCC 17978 / DSM 105126 / CIP 53.77 / LMG 1025 / NCDC KC755 / 5377), this protein is 5-oxoprolinase subunit A.